Here is a 561-residue protein sequence, read N- to C-terminus: Methyl-accepting chemotaxis protein CtpM (561 aa).

Residues 1–11 (MMRLTLKSKVL) are Cytoplasmic-facing. The helical transmembrane segment at 12–32 (LLAMVPVLLFALVLSGGAVLI) threads the bilayer. Topologically, residues 33–205 (LKKQADAEVK…KQDIDERIGT (173 aa)) are periplasmic. The chain crosses the membrane as a helical span at residues 206 to 226 (LIASIVGIAGVLLVVLLVIGL). Residues 227 to 561 (AVANAMLRPL…LGRLVGQFRI (335 aa)) are Cytoplasmic-facing. The 55-residue stretch at 230–284 (NAMLRPLHQIRQNLDDIAAGEGDLTRRLPVTSYDELGELAGSFNRFVEKIHGLVR) folds into the HAMP domain. One can recognise a Methyl-accepting transducer domain in the interval 289-525 (MTGDLKQLVE…EINRSVHQIA (237 aa)). Residues 333–357 (HEVAQSAQRAAEAAQQTDHEGQAAK) form a disordered region. A compositionally biased stretch (low complexity) spans 336–348 (AQSAQRAAEAAQQ).

Belongs to the methyl-accepting chemotaxis (MCP) protein family. As to quaternary structure, homodimer. The ligand-binding domain (LBD) is dimeric in the presence and the absence of ligands.

It is found in the cell inner membrane. Chemotactic-signal transducers respond to changes in the concentration of attractants and repellents in the environment, transduce a signal from the outside to the inside of the cell, and facilitate sensory adaptation through the variation of the level of methylation. Directly recognizes five C4-dicarboxylic acids: L-malic, citramalic, citraconic, bromosuccinic and methylsuccinic acids. Three of the identified ligands act as chemoattractants (L-malic, D,L-bromosuccinic and L-citramalic acids) whereas two of them (L-methylsuccinic and citraconic acids) behave as antagonists by inhibiting the downstream chemotaxis signaling cascade. Antagonists compete with chemoattractants, thereby decreasing the affinity for chemoattractants and the subsequent chemotactic response. Acts through the che chemosensory pathway. The chain is Methyl-accepting chemotaxis protein CtpM from Pseudomonas aeruginosa (strain ATCC 15692 / DSM 22644 / CIP 104116 / JCM 14847 / LMG 12228 / 1C / PRS 101 / PAO1).